An 86-amino-acid polypeptide reads, in one-letter code: Small ribosomal subunit protein bS16 (86 aa).

The protein belongs to the bacterial ribosomal protein bS16 family.

This Myxococcus xanthus (strain DK1622) protein is Small ribosomal subunit protein bS16.